Reading from the N-terminus, the 191-residue chain is MASPSCASTLPWTAAAFSYPRRLQTRRAPSLVIVAQGRVKKYRQVILKDDIDEISGKKGDTMKVRAGFYRNFLLPKGKATLLTPDVLKEMQLEQERIEAEKKRVKEEAQQLARVFETIGAFKVPRKGGKGKQIFGSVTAQDLVDIIKSQLNRDVDKRLVEVPEIREVGEYVAEIKLHPDVTAKVRLTVYTK.

A chloroplast-targeting transit peptide spans 1 to 35 (MASPSCASTLPWTAAAFSYPRRLQTRRAPSLVIVA).

The protein belongs to the bacterial ribosomal protein bL9 family. Part of the 50S ribosomal subunit.

The protein resides in the plastid. Its subcellular location is the chloroplast. Functionally, binds to the 23S rRNA. The polypeptide is Large ribosomal subunit protein bL9c (RPL9) (Triticum aestivum (Wheat)).